Consider the following 124-residue polypeptide: Large ribosomal subunit protein bL36m (124 aa).

Belongs to the bacterial ribosomal protein bL36 family. In terms of assembly, component of the mitochondrial large ribosomal subunit (mt-LSU). Mature N.crassa 74S mitochondrial ribosomes consist of a small (37S) and a large (54S) subunit. The 37S small subunit contains a 16S ribosomal RNA (16S mt-rRNA) and 32 different proteins. The 54S large subunit contains a 23S rRNA (23S mt-rRNA) and 42 different proteins. bL36m has a zinc binding site.

It is found in the mitochondrion. In terms of biological role, component of the mitochondrial ribosome (mitoribosome), a dedicated translation machinery responsible for the synthesis of mitochondrial genome-encoded proteins, including at least some of the essential transmembrane subunits of the mitochondrial respiratory chain. The mitoribosomes are attached to the mitochondrial inner membrane and translation products are cotranslationally integrated into the membrane. In Neurospora crassa (strain ATCC 24698 / 74-OR23-1A / CBS 708.71 / DSM 1257 / FGSC 987), this protein is Large ribosomal subunit protein bL36m (rtc6).